The chain runs to 475 residues: Ribulose bisphosphate carboxylase large chain (475 aa).

A propeptide spanning residues 1–2 (MS) is cleaved from the precursor. At P3 the chain carries N-acetylproline. K14 is subject to N6,N6,N6-trimethyllysine. Positions 123 and 173 each coordinate substrate. The active-site Proton acceptor is the K175. K177 is a binding site for substrate. Mg(2+) contacts are provided by K201, D203, and E204. N6-carboxylysine is present on K201. The active-site Proton acceptor is H294. Residues R295, H327, and S379 each coordinate substrate.

It belongs to the RuBisCO large chain family. Type I subfamily. Heterohexadecamer of 8 large chains and 8 small chains; disulfide-linked. The disulfide link is formed within the large subunit homodimers. Mg(2+) is required as a cofactor. Post-translationally, the disulfide bond which can form in the large chain dimeric partners within the hexadecamer appears to be associated with oxidative stress and protein turnover.

The protein localises to the plastid. It localises to the chloroplast. It catalyses the reaction 2 (2R)-3-phosphoglycerate + 2 H(+) = D-ribulose 1,5-bisphosphate + CO2 + H2O. The enzyme catalyses D-ribulose 1,5-bisphosphate + O2 = 2-phosphoglycolate + (2R)-3-phosphoglycerate + 2 H(+). Its function is as follows. RuBisCO catalyzes two reactions: the carboxylation of D-ribulose 1,5-bisphosphate, the primary event in carbon dioxide fixation, as well as the oxidative fragmentation of the pentose substrate in the photorespiration process. Both reactions occur simultaneously and in competition at the same active site. In Chlorokybus atmophyticus (Soil alga), this protein is Ribulose bisphosphate carboxylase large chain.